Here is a 406-residue protein sequence, read N- to C-terminus: COP9 signalosome complex subunit 4 (406 aa).

The residue at position 2 (A2) is an N-acetylalanine. K25 carries the post-translational modification N6-acetyllysine. Residues 197–366 form the PCI domain; sequence YRRKFIEAAQ…GIVHFETREA (170 aa).

It belongs to the CSN4 family. As to quaternary structure, component of the CSN complex, composed of COPS1/GPS1, COPS2, COPS3, COPS4, COPS5, COPS6, COPS7 (COPS7A or COPS7B), COPS8 and COPS9. In the complex, it probably interacts directly with COPS1, COPS2, COPS3, COPS5, COPS6, COPS7 (COPS7A or COPS7B) and COPS8. Interacts with TOR1A; the interaction is direct and associates TOR1A and SNAPIN with the CSN complex. Interacts with STON2; controls STON2 neddylation levels. Interacts with ERCC6.

The protein resides in the cytoplasm. Its subcellular location is the nucleus. It is found in the cytoplasmic vesicle. The protein localises to the secretory vesicle. It localises to the synaptic vesicle. Functionally, component of the COP9 signalosome complex (CSN), a complex involved in various cellular and developmental processes. The CSN complex is an essential regulator of the ubiquitin (Ubl) conjugation pathway by mediating the deneddylation of the cullin subunits of SCF-type E3 ligase complexes, leading to decrease the Ubl ligase activity of SCF-type complexes such as SCF, CSA or DDB2. Also involved in the deneddylation of non-cullin subunits such as STON2. The complex is also involved in phosphorylation of p53/TP53, c-jun/JUN, IkappaBalpha/NFKBIA, ITPK1, IRF8/ICSBP and SNAPIN, possibly via its association with CK2 and PKD kinases. CSN-dependent phosphorylation of TP53 and JUN promotes and protects degradation by the Ubl system, respectively. The sequence is that of COP9 signalosome complex subunit 4 (COPS4) from Bos taurus (Bovine).